The following is a 447-amino-acid chain: Probable ethanolamine kinase B (447 aa).

The span at 178–208 shows a compositional bias: low complexity; it reads STTISTSTSTSTSTSSTSPSTSPSLENSTLS. A disordered region spans residues 178-217; it reads STTISTSTSTSTSTSSTSPSTSPSLENSTLSPRNMNTQTS.

Belongs to the choline/ethanolamine kinase family.

Its subcellular location is the cytoplasm. The enzyme catalyses ethanolamine + ATP = phosphoethanolamine + ADP + H(+). It functions in the pathway phospholipid metabolism; phosphatidylethanolamine biosynthesis; phosphatidylethanolamine from ethanolamine: step 1/3. Functionally, highly specific for ethanolamine phosphorylation. May be a rate-controlling step in phosphatidylethanolamine biosynthesis. In Dictyostelium discoideum (Social amoeba), this protein is Probable ethanolamine kinase B (etnkB).